The following is a 168-amino-acid chain: RNA pyrophosphohydrolase (168 aa).

The Nudix hydrolase domain maps to 8–159 (PYRTCVGVML…KRPVYERVVK (152 aa)). The Nudix box motif lies at 47–68 (GGVDPGEDTWKAAKRELYEETS).

It belongs to the Nudix hydrolase family. RppH subfamily. It depends on a divalent metal cation as a cofactor.

Functionally, accelerates the degradation of transcripts by removing pyrophosphate from the 5'-end of triphosphorylated RNA, leading to a more labile monophosphorylated state that can stimulate subsequent ribonuclease cleavage. This is RNA pyrophosphohydrolase from Rhodopseudomonas palustris (strain ATCC BAA-98 / CGA009).